A 282-amino-acid polypeptide reads, in one-letter code: MLRVAVPNKGTLAGPASEMLAEAGYRQRHEQRDLTVLDPVNDVEFFFLRPKDIAIYVGSGELDLGITGRDLALDSGSPVDERLALGFGGSNFRYAAPAEAGEWSVGDLAGRRIATSYPRLVTDDLARYGVSADVIRLDGAVEISIQLGVADAIADVVGSGRTLRQHSLVAFGEPICSSEAVVIERRGSDQQEAKDRLVARLQGVVFAQQYVMLDYNCPRDLLDEAAKLTPGLGSPTMSPLADEKWVAVRAMVSRKEAPAIMDRLADFGAKAILSSDIRSCRM.

It belongs to the ATP phosphoribosyltransferase family. Long subfamily. Requires Mg(2+) as cofactor.

It localises to the cytoplasm. It carries out the reaction 1-(5-phospho-beta-D-ribosyl)-ATP + diphosphate = 5-phospho-alpha-D-ribose 1-diphosphate + ATP. It participates in amino-acid biosynthesis; L-histidine biosynthesis; L-histidine from 5-phospho-alpha-D-ribose 1-diphosphate: step 1/9. Its activity is regulated as follows. Feedback inhibited by histidine. In terms of biological role, catalyzes the condensation of ATP and 5-phosphoribose 1-diphosphate to form N'-(5'-phosphoribosyl)-ATP (PR-ATP). Has a crucial role in the pathway because the rate of histidine biosynthesis seems to be controlled primarily by regulation of HisG enzymatic activity. The protein is ATP phosphoribosyltransferase of Saccharopolyspora erythraea (strain ATCC 11635 / DSM 40517 / JCM 4748 / NBRC 13426 / NCIMB 8594 / NRRL 2338).